The sequence spans 466 residues: tRNA modification GTPase MnmE (466 aa).

3 residues coordinate (6S)-5-formyl-5,6,7,8-tetrahydrofolate: R22, E87, and R126. A TrmE-type G domain is found at 222 to 382 (GWRTVIVGRP…LTELIRRMVY (161 aa)). N232 contributes to the K(+) binding site. GTP-binding positions include 232 to 237 (NVGKSS), 251 to 257 (TEIPGTT), and 276 to 279 (DTAG). S236 provides a ligand contact to Mg(2+). Residues T251, I253, and T256 each coordinate K(+). T257 contributes to the Mg(2+) binding site. K466 serves as a coordination point for (6S)-5-formyl-5,6,7,8-tetrahydrofolate.

Belongs to the TRAFAC class TrmE-Era-EngA-EngB-Septin-like GTPase superfamily. TrmE GTPase family. Homodimer. Heterotetramer of two MnmE and two MnmG subunits. Requires K(+) as cofactor.

Its subcellular location is the cytoplasm. In terms of biological role, exhibits a very high intrinsic GTPase hydrolysis rate. Involved in the addition of a carboxymethylaminomethyl (cmnm) group at the wobble position (U34) of certain tRNAs, forming tRNA-cmnm(5)s(2)U34. The polypeptide is tRNA modification GTPase MnmE (Heliobacterium modesticaldum (strain ATCC 51547 / Ice1)).